Reading from the N-terminus, the 499-residue chain is Probable UTP--glucose-1-phosphate uridylyltransferase (499 aa).

Residues 108 to 111, K122, Q185, and G214 each bind UTP; that span reads LNGG. Residue 110-111 participates in substrate binding; sequence GG. Residues H215 and 243–245 each bind substrate; that span reads NID. UTP contacts are provided by D245 and K387.

This sequence belongs to the UDPGP type 1 family.

It is found in the cytoplasm. The protein resides in the nucleus. It catalyses the reaction alpha-D-glucose 1-phosphate + UTP + H(+) = UDP-alpha-D-glucose + diphosphate. Its function is as follows. Plays a central role as a glucosyl donor in cellular metabolic pathways. The polypeptide is Probable UTP--glucose-1-phosphate uridylyltransferase (Schizosaccharomyces pombe (strain 972 / ATCC 24843) (Fission yeast)).